Consider the following 498-residue polypeptide: Mitogen-activated protein kinase 15 (498 aa).

The 292-residue stretch at 13-304 (YKIEEVIGKG…AEEALADPYF (292 aa)) folds into the Protein kinase domain. ATP-binding positions include 19–27 (IGKGSYGVV) and Lys42. Asp139 (proton acceptor) is an active-site residue. Residue Thr175 is modified to Phosphothreonine. The TXY signature appears at 175–177 (TDY). Position 177 is a phosphotyrosine (Tyr177). Disordered stretches follow at residues 388–411 (STAA…SDDR) and 470–498 (STAE…GSYP). Polar residues predominate over residues 486–498 (LATNTVSPRGSYP).

This sequence belongs to the protein kinase superfamily. CMGC Ser/Thr protein kinase family. MAP kinase subfamily. Dually phosphorylated on Thr-175 and Tyr-177, which activates the enzyme.

It catalyses the reaction L-seryl-[protein] + ATP = O-phospho-L-seryl-[protein] + ADP + H(+). The enzyme catalyses L-threonyl-[protein] + ATP = O-phospho-L-threonyl-[protein] + ADP + H(+). With respect to regulation, activated by threonine and tyrosine phosphorylation. The chain is Mitogen-activated protein kinase 15 (MPK15) from Oryza sativa subsp. japonica (Rice).